A 428-amino-acid chain; its full sequence is Enolase (428 aa).

(2R)-2-phosphoglycerate is bound at residue Gln163. Glu205 acts as the Proton donor in catalysis. The Mg(2+) site is built by Asp242, Glu285, and Asp312. (2R)-2-phosphoglycerate-binding residues include Lys337, Arg366, Ser367, and Lys388. Lys337 serves as the catalytic Proton acceptor.

Belongs to the enolase family. Requires Mg(2+) as cofactor.

It is found in the cytoplasm. The protein localises to the secreted. Its subcellular location is the cell surface. The enzyme catalyses (2R)-2-phosphoglycerate = phosphoenolpyruvate + H2O. It functions in the pathway carbohydrate degradation; glycolysis; pyruvate from D-glyceraldehyde 3-phosphate: step 4/5. Its function is as follows. Catalyzes the reversible conversion of 2-phosphoglycerate (2-PG) into phosphoenolpyruvate (PEP). It is essential for the degradation of carbohydrates via glycolysis. The sequence is that of Enolase from Novosphingobium aromaticivorans (strain ATCC 700278 / DSM 12444 / CCUG 56034 / CIP 105152 / NBRC 16084 / F199).